The sequence spans 217 residues: Glycerol-3-phosphate acyltransferase (217 aa).

6 helical membrane-spanning segments follow: residues 3–23 (IVIL…VWIG), 56–76 (VLLM…LFGL), 78–98 (GVNP…PIFA), 120–140 (FFIY…MVSL), 142–162 (SMIS…TVPA), and 163–183 (ILPT…TFIF).

It belongs to the PlsY family. In terms of assembly, probably interacts with PlsX.

It is found in the cell membrane. It carries out the reaction an acyl phosphate + sn-glycerol 3-phosphate = a 1-acyl-sn-glycero-3-phosphate + phosphate. It participates in lipid metabolism; phospholipid metabolism. Functionally, catalyzes the transfer of an acyl group from acyl-phosphate (acyl-PO(4)) to glycerol-3-phosphate (G3P) to form lysophosphatidic acid (LPA). This enzyme utilizes acyl-phosphate as fatty acyl donor, but not acyl-CoA or acyl-ACP. In Enterococcus faecalis (strain ATCC 700802 / V583), this protein is Glycerol-3-phosphate acyltransferase.